We begin with the raw amino-acid sequence, 1009 residues long: DNA polymerase catalytic subunit (1009 aa).

This sequence belongs to the DNA polymerase type-B family.

Its subcellular location is the host nucleus. It catalyses the reaction DNA(n) + a 2'-deoxyribonucleoside 5'-triphosphate = DNA(n+1) + diphosphate. The protein is DNA polymerase catalytic subunit (9) of Saimiri sciureus (Common squirrel monkey).